Here is a 3133-residue protein sequence, read N- to C-terminus: MTENIDKNDDDVAVIGIGLRFPSGNLKESISKPNQLFNELLNGLDGIVTTSERWSDNYYLNGEVVSKFAGLLPLDEWKQFDPIFFAINPSYDNVSSIDPQQRLLLKCVWEALEDSGIDPISLRGTNTSTFIGSSTIDYNDLQKSPFETQNNIFGSTTHSIANRIGFSFDFRGENLTIDTACSSSSNAINCGYNSIKSNKSNVSIVGGVNFILNPYISKSFTQLDMLSPTGKCHTFSSDADGFVRSEGVGIVVLKKLKDAIKDSNNIYCVIKGSSSNIDGNFDKLNFYSPSKLSQFENIKLAIKSTNGQINESDIDYCETHGTGTPTGDPIELEGISRAFNNKASTTNNNKQVLVGSFKSNIGHTEACSGVASLIKCCLMFKNKLFLQNINFKEPNPLINFKEWGLKVVTEPIKFNENKPTVMLINNFGITGSNVCLILSEFSGYQFGYSKSNDYQKMEIDNKFNEKKKYLIPLSSNSSTSLDNYKLSIIKHLNSRSSSSSTTTSFEEFVYNQIKFKSTSLIQKSVIIASDWNEFQDENNQIKLENSDNLISNITVEKKKSPIIVMVLCGQGSQYNKMALSLYDNEPIFRESVNRFDKELFKYYGYSVLDKLRSIDDKDLISIHQSILAQPATVIIQVSLYELYKHRGVSADIIIGHSLGEISSAYCSGMIDFQTLCYLTYHRSVAQNRTSGTGKMLSVNISSDEFINSYQSTTKYESLEIACYNSPTSIVIAGKEDLLNEITKDFKTNDIFCAMLGSLSSFHTSSQQMIKDEVCSLNISSKQSSIAIFSTVTTNLFNDETSPFDADYVFDNIRQPVRFTQTITNLYKYFESNDMGNEITFIEVSPHPTLQFYLNQMKSTQSSYFNSGKNITIYSPLNKKKNDYNEFLKTISLLYVNNNLNINFKSQLIDNNNNYTNQFNNLPLYQWDDKEYFKISWFQEKIKNEGPSIHSLGNNTDSPYPSYQTFIDIKKSPFQWLKGHQVSDKFYYPGMGYVHNLLSIYPNQDITISSLEFKSPLILTEGNRQCLQTTIAPLSKNEFNIKSHYKDQKTNQWILTSLGNFSLSKHNIENNEPINIRALKDKCNFTCISKQDLYETVRIKTNLTYKGLFQGVKQCYIGNNCSLAIVSLNEIYNQKEYNHLINNSNMNTLFNTAILDTCLHGVLGVVTQPVVLDRIEGFKFYSSNTPSFNNNSTNSNNDTINELYVYSENKARINSKTYSGSIKIILPNGTLLIDIGNVVCTIVASNPDSTIICEPPSNKIYTPYLQSKDSVIKNPEQFKHLYRVDEFSFKNEENQFISIGLLLSLFYKHINNRCPSINLESLETLEYDQFKQLYYNSSRNENLFKFIFENLKNYQNIMYSNSFNKTILFNNNNNNNNNNNNNNNNNNNNNNNNNNNNNNNNNNDNDNDNNCYNYENFYIRTTKIMAKQLFPLKDDDSITDTPQSLFESGYLDYHYKNSKIVQPLNNLLGEIIVETLKPILNEPIVFRILEAGGGTGSLSLLILEKICKLLNENNSTSIIDIEFTWSDISASFFAEIKEKFSSFTNHNSLNIIYRVLDLEKPLLDQDLKASYYDFVVMSNVMHVVKKLKPTLNEIHNILAPNGQLLFVEPPYKSFFIDSIFGCFSQWWPSSDSDIELRPDRCCMEQEKWISLLNQCTYRDTVLYGNDKLLFLIQTRKPTINEIISEQSISLDQLNSFNNIILFSSNNNNDNNNNSNNYYNNRNSYSSSSIQNLIRLNQELKHKIININNYNEFQSWITNNQNKDNCGNKTLIIFLKSIESIMNTSNFKEITFEYIQINQLILKLELSNSFKHLLLSLNSTTDNYLSSSIVGAARYFVEFPQLDLYILNYDNISIENNQQLLSLINYLIDSNNNIQKEFTIINNKVYYERYCRRSNNIKSKLQSKSFETNKDNLFIQLNSNLEYQLYSKKDELNSNEVEIEIKATSINYKDYLMYIGMIGTDIDIKYGKEYEIENGIGIDNPKIGNDFSGIITRLGCNVKDFKVGDQVCGVGSKTNSSHIIVDYNYIYYKPLNYSYSVSASIPSVYITSLHSIYNIGNLKSNESILIHSAAGGIGISSLDLLKSKQHQGYIFLTVGSKDKEEYLIKKYGSLITAIYSSRNKNYVKDIKNKLIELGEVEQHQQQGVDLILNTLSSEFMDSNFQCLNLSGRIVDLSITHLTPNDYMTNNHYKFNVGYFNVEVIDFPGKLIKSYIKKIIKMINSNKLEPSVPIIEYSNNQFKDAIEYINQRKHIGKIIVNHNQDEFNRIYNIYQNNNNQIMKHSYDISKLNIGKNILLTGQTGIVLEILKYLVKYSNHSIENIIILSKSKLKWELELLINQTKFKKDNIIKFHFNQIDIEDSTKVNQVLNQLELNENITNIDSIIHFAFMNDICDVQKVDMNRLNITHGAKTIGAINLHNQSINRSWNIKQFIMASSVVSIFGSDKQCCYVSACNVIDSLSKYRHSIGLPSLAINLGAISSTGFVSRNNAIETMLKSTLSNLFSPQLVISSLDLFIQNQHQYPNYCLSDFNFEVLPSTLTNQHHSKFDFEINIVKKSNQIKSFSGDDNNNEIIRSTILNKISEILSIDESKINEDLQLSQYGMDSLVIVQLKNFVDNQLGHNIITIQQLQNNKINQSIEIIKSAHNKNKNNNNNNNNNSNHHDNIKKEQQSLDEFIKNETKLNESIISRPYSIKNILNNNNNNNNNNNNNNNNNNNNNNNNNNNNCQSIFLTGSTGFLGAYLLIELIKVNNISKIYCLIRNNSKLTNPIDVIINNLKKHQLIDMNKESPKRKTKIINHTGNISNDKLNSSNSNSDNSNNNNNQINEDQLIKIIPIIGDISKDKFGLTEQDYLKLSNECDIIINSAADINLKSNYEESKTVNVNSVNQIIKLSVSNNSSQKLIVHFSSLAVFINHPFKDEEDFEETNSVPSFNSTPIGYIQSKVISEKLITNAAESRGIPSIIIRPPDIFSNPITGIGHSNDFISLLIKASKEIGYYPNIHKSIFSTPVTTIAKTTIDLIFNENSWNQNKSKPISIYNFNGNSMEMKSFYRVLENNFKCKEIDFDEWIELVSKSNGKSSKRYSTFHIHKNQNLLLTTFTINSLLKMSNSTKELLTSIGSYNHQDWEINESMILNDIINNH.

Residues 9–440 form the Ketosynthase family 3 (KS3) domain; sequence DDDVAVIGIG…GSNVCLILSE (432 aa). Active-site for beta-ketoacyl synthase activity residues include cysteine 181, histidine 320, and histidine 363. The interval 647 to 680 is acyl/malonyl transferase; that stretch reads GVSADIIIGHSLGEISSAYCSGMIDFQTLCYLTY. Residue serine 657 is the For acyl/malonyl transferase activity of the active site. Positions 945–1067 are N-terminal hotdog fold; the sequence is GPSIHSLGNN…GNFSLSKHNI (123 aa). A PKS/mFAS DH domain is found at 945-1248; it reads GPSIHSLGNN…CTIVASNPDS (304 aa). Histidine 979 functions as the Proton acceptor; for dehydratase activity in the catalytic mechanism. The C-terminal hotdog fold stretch occupies residues 1083-1248; the sequence is NFTCISKQDL…CTIVASNPDS (166 aa). Aspartate 1155 (proton donor; for dehydratase activity) is an active-site residue. The interval 1370–1408 is disordered; sequence NNNNNNNNNNNNNNNNNNNNNNNNNNNNNNNNNDNDNDN. The 78-residue stretch at 2562–2639 folds into the Carrier domain; sequence NNNEIIRSTI…QSIEIIKSAH (78 aa). An O-(pantetheine 4'-phosphoryl)serine modification is found at serine 2599. Residues 2649-2711 are a coiled coil; it reads NNNNSNHHDN…NNNNNNNNNN (63 aa). 2 disordered regions span residues 2691–2715 and 2794–2817; these read LNNNNNNNNNNNNNNNNNNNNNNNN and GNISNDKLNSSNSNSDNSNNNNNQ. 2 stretches are compositionally biased toward low complexity: residues 2692–2715 and 2795–2817; these read NNNNNNNNNNNNNNNNNNNNNNNN and NISNDKLNSSNSNSDNSNNNNNQ.

It depends on pantetheine 4'-phosphate as a cofactor.

Probable polyketide synthase. The polypeptide is Probable polyketide synthase 38 (pks38) (Dictyostelium discoideum (Social amoeba)).